The chain runs to 213 residues: Cysteine dioxygenase (213 aa).

The Fe cation site is built by His100, His102, and His160. The 3'-(S-cysteinyl)-tyrosine (Cys-Tyr) cross-link spans Cys107–Tyr177.

Belongs to the cysteine dioxygenase family. The cofactor is Fe cation. Post-translationally, the thioether cross-link between Cys-107 and Tyr-177 plays a structural role through stabilizing the Fe(2+) ion, and prevents the production of highly damaging free hydroxyl radicals by holding the oxygen radical via hydroxyl hydrogen.

The catalysed reaction is L-cysteine + O2 = 3-sulfino-L-alanine + H(+). This is Cysteine dioxygenase (CDO1) from Ajellomyces capsulatus (strain G186AR / H82 / ATCC MYA-2454 / RMSCC 2432) (Darling's disease fungus).